Here is a 257-residue protein sequence, read N- to C-terminus: Major prion protein (257 aa).

The first 24 residues, 1 to 24 (MVKSHIGGWILVLFVAAWSDIGLC), serve as a signal peptide directing secretion. The interval 25–234 (KKRPKPGGGW…EYEAYAQRGA (210 aa)) is interaction with GRB2, ERI3 and SYN1. Positions 28 to 113 (PKPGGGWNTG…NKPSKPKTNM (86 aa)) are disordered. Tandem repeats lie at residues 54 to 62 (PQGGGGWGQ), 63 to 70 (PHGGGWGQ), 71 to 78 (PHGGGWGQ), 79 to 86 (PHGGGWGQ), and 87 to 95 (PHGGGGWGQ). The segment at 54 to 95 (PQGGGGWGQPHGGGWGQPHGGGWGQPHGGGWGQPHGGGGWGQ) is 5 X 8 AA tandem repeats of P-H-G-G-G-W-G-Q. A compositionally biased stretch (gly residues) spans 55–100 (QGGGGWGQPHGGGWGQPHGGGWGQPHGGGWGQPHGGGGWGQGGGSH). Positions 64, 65, 66, 72, 73, 74, 80, 81, 82, 88, 90, and 91 each coordinate Cu(2+). Cysteine 183 and cysteine 218 are joined by a disulfide. Residues asparagine 185 and asparagine 201 are each glycosylated (N-linked (GlcNAc...) asparagine). Residue alanine 234 is the site of GPI-anchor amidated alanine attachment. The propeptide at 235–257 (SVILFSSPPVILLISFLLFLIVG) is removed in mature form.

The protein belongs to the prion family. As to quaternary structure, monomer and homodimer. Has a tendency to aggregate into amyloid fibrils containing a cross-beta spine, formed by a steric zipper of superposed beta-strands. Soluble oligomers may represent an intermediate stage on the path to fibril formation. Copper binding may promote oligomerization. Interacts with GRB2, APP, ERI3/PRNPIP and SYN1. Mislocalized cytosolically exposed PrP interacts with MGRN1; this interaction alters MGRN1 subcellular location and causes lysosomal enlargement. Interacts with KIAA1191.

The protein resides in the cell membrane. It is found in the golgi apparatus. In terms of biological role, its primary physiological function is unclear. Has cytoprotective activity against internal or environmental stresses. May play a role in neuronal development and synaptic plasticity. May be required for neuronal myelin sheath maintenance. May play a role in iron uptake and iron homeostasis. Soluble oligomers are toxic to cultured neuroblastoma cells and induce apoptosis (in vitro). Association with GPC1 (via its heparan sulfate chains) targets PRNP to lipid rafts. Also provides Cu(2+) or Zn(2+) for the ascorbate-mediated GPC1 deaminase degradation of its heparan sulfate side chains. The polypeptide is Major prion protein (PRNP) (Sus scrofa (Pig)).